Consider the following 233-residue polypeptide: NADP-dependent glyceraldehyde-3-phosphate dehydrogenase (233 aa).

7-8 (NY) contributes to the substrate binding site. The NADP(+) site is built by Lys-30 and Ser-33. Residue 83–87 (GGDTG) coordinates NAD(+). Catalysis depends on Glu-102, which acts as the Proton acceptor. 135 to 137 (RCT) contacts substrate. Residue Cys-136 is the Nucleophile of the active site. Residues Glu-180 and Glu-229 each contribute to the NADP(+) site.

This sequence belongs to the aldehyde dehydrogenase family.

It is found in the cytoplasm. The enzyme catalyses D-glyceraldehyde 3-phosphate + NADP(+) + H2O = (2R)-3-phosphoglycerate + NADPH + 2 H(+). Important as a means of generating NADPH for biosynthetic reactions. In Scenedesmus vacuolatus (Green alga), this protein is NADP-dependent glyceraldehyde-3-phosphate dehydrogenase (GapN).